Here is a 393-residue protein sequence, read N- to C-terminus: NAD(P)H-quinone oxidoreductase subunit H, chloroplastic (393 aa).

This sequence belongs to the complex I 49 kDa subunit family. NDH is composed of at least 16 different subunits, 5 of which are encoded in the nucleus.

The protein resides in the plastid. Its subcellular location is the chloroplast thylakoid membrane. The enzyme catalyses a plastoquinone + NADH + (n+1) H(+)(in) = a plastoquinol + NAD(+) + n H(+)(out). The catalysed reaction is a plastoquinone + NADPH + (n+1) H(+)(in) = a plastoquinol + NADP(+) + n H(+)(out). NDH shuttles electrons from NAD(P)H:plastoquinone, via FMN and iron-sulfur (Fe-S) centers, to quinones in the photosynthetic chain and possibly in a chloroplast respiratory chain. The immediate electron acceptor for the enzyme in this species is believed to be plastoquinone. Couples the redox reaction to proton translocation, and thus conserves the redox energy in a proton gradient. This chain is NAD(P)H-quinone oxidoreductase subunit H, chloroplastic, found in Anthoceros angustus (Hornwort).